The chain runs to 173 residues: Inorganic pyrophosphatase (173 aa).

3 residues coordinate substrate: Lys26, Arg40, and Tyr52. The Mg(2+) site is built by Asp62, Asp67, and Asp99. Substrate is bound at residue Tyr138.

It belongs to the PPase family. As to quaternary structure, homohexamer. Mg(2+) is required as a cofactor.

Its subcellular location is the cytoplasm. It carries out the reaction diphosphate + H2O = 2 phosphate + H(+). In terms of biological role, catalyzes the hydrolysis of inorganic pyrophosphate (PPi) forming two phosphate ions. This Sulfolobus acidocaldarius (strain ATCC 33909 / DSM 639 / JCM 8929 / NBRC 15157 / NCIMB 11770) protein is Inorganic pyrophosphatase.